Here is an 82-residue protein sequence, read N- to C-terminus: MVKLRLKRYGRKQQPSYRIVAMDSRSKRDGKAIEELGFYNPITNETRIDIAKILKRLKQGAQTTRTVKNILNEAQIIAKENS.

It belongs to the bacterial ribosomal protein bS16 family.

Its subcellular location is the plastid. The protein localises to the chloroplast. This is Small ribosomal subunit protein bS16c from Porphyra purpurea (Red seaweed).